A 234-amino-acid polypeptide reads, in one-letter code: GTP cyclohydrolase 1 (234 aa).

Residues 1 to 26 (MDALIKPLRAGKPDAKPADPKGTEFR) are disordered. The span at 11–26 (GKPDAKPADPKGTEFR) shows a compositional bias: basic and acidic residues. Residues Cys-123, His-126, and Cys-194 each coordinate Zn(2+).

This sequence belongs to the GTP cyclohydrolase I family. As to quaternary structure, toroid-shaped homodecamer, composed of two pentamers of five dimers.

It carries out the reaction GTP + H2O = 7,8-dihydroneopterin 3'-triphosphate + formate + H(+). It participates in cofactor biosynthesis; 7,8-dihydroneopterin triphosphate biosynthesis; 7,8-dihydroneopterin triphosphate from GTP: step 1/1. The protein is GTP cyclohydrolase 1 of Rhodopseudomonas palustris (strain BisB18).